The sequence spans 410 residues: Venom metalloproteinase 2 (410 aa).

A signal peptide spans 1 to 22 (MDTFILTYSILFLALFIESIHS). N-linked (GlcNAc...) asparagine glycosylation is found at asparagine 64, asparagine 112, asparagine 187, asparagine 231, asparagine 292, and asparagine 307. The region spanning 214–410 (FYPKLLVLVD…NNNVSKFIWS (197 aa)) is the Peptidase M12B domain. Residue histidine 365 participates in Zn(2+) binding. Residue glutamate 366 is part of the active site. 2 residues coordinate Zn(2+): histidine 369 and histidine 375. The N-linked (GlcNAc...) asparagine glycan is linked to asparagine 403.

This sequence in the C-terminal section; belongs to the venom metalloproteinase (M12B) family. In terms of assembly, monomer. Zn(2+) is required as a cofactor. In terms of tissue distribution, expressed by the venom gland.

The protein localises to the secreted. Its activity is regulated as follows. The gelatinase activity is inhibited by EDTA. In terms of biological role, the recombinant protein has gelatinase activity. In vivo, injection of this recombinant into fifth instar L.oleracea (host) larvae results in partial insect mortality associated with the molt to sixth instar, with surviving insects showing retarded development and growth. This is Venom metalloproteinase 2 from Eulophus pennicornis (Parasitoid wasp).